We begin with the raw amino-acid sequence, 418 residues long: Hepatic and glial cell adhesion molecule (418 aa).

The first 33 residues, 1–33 (MKREREAPSRAFSALRLAPFVYLLLIQTEPLEG), serve as a signal peptide directing secretion. An Ig-like V-type domain is found at 34–141 (VNITSPVRLI…TGEKTINLTV (108 aa)). Topologically, residues 34-240 (VNITSPVRLI…VKITVYRRSS (207 aa)) are extracellular. N-linked (GlcNAc...) asparagine glycosylation is found at N35, N138, N167, and N189. The Ig-like C2-type domain occupies 148 to 234 (PQVLVASTTV…QGRSPPVKIT (87 aa)). An intrachain disulfide couples C168 to C217. A helical membrane pass occupies residues 241–261 (LYIILSTGGIFLLVTLVTVCA). Over 262 to 418 (CWKPSKKSGK…DEAGPVEISA (157 aa)) the chain is Cytoplasmic. Residues 271–418 (KKRKLEKQNS…DEAGPVEISA (148 aa)) form a disordered region. S280 bears the Phosphoserine mark. Basic and acidic residues predominate over residues 287–308 (SDDRLKPEADTLPRSGEQERKN). Phosphoserine is present on residues S352 and S379. The segment covering 385–400 (GSPGRSRSASRTLRTA) has biased composition (low complexity).

Homodimer. Dimer formation occurs predominantly through cis interactions on the cell surface. Part of a complex containing MLC1, TRPV4, AQP4 and ATP1B1. Interacts with CLCN2. Post-translationally, N-glycosylated.

Its subcellular location is the cytoplasm. The protein resides in the cell membrane. Involved in regulating cell motility and cell-matrix interactions. May inhibit cell growth through suppression of cell proliferation. In glia, associates and targets CLCN2 at astrocytic processes and myelinated fiber tracts where it may regulate transcellular chloride flux involved in neuron excitability. The protein is Hepatic and glial cell adhesion molecule of Bos taurus (Bovine).